We begin with the raw amino-acid sequence, 386 residues long: Patatin group M-2 (386 aa).

The first 23 residues, 1–23, serve as a signal peptide directing secretion; the sequence is MATTKSFLILFFMILATTSSTCA. The 198-residue stretch at 32 to 229 folds into the PNPLA domain; sequence LSIDGGGIKG…TVGDPALLSL (198 aa). The GXGXXG motif lies at 36-41; that stretch reads GGGIKG. A GXSXG motif is present at residues 75–79; the sequence is GTSTG. Ser77 serves as the catalytic Nucleophile. Asn115 carries an N-linked (GlcNAc...) asparagine glycan. Asp215 acts as the Proton acceptor in catalysis. The DGA/G signature appears at 215 to 217; the sequence is DGG. Positions 321–384 form a coiled coil; that stretch reads ENALTGTTTE…DRKKLRANKA (64 aa).

This sequence belongs to the patatin family. In terms of tissue distribution, tuber.

It localises to the vacuole. In terms of biological role, probable lipolytic acyl hydrolase (LAH), an activity which is thought to be involved in the response of tubers to pathogens. The protein is Patatin group M-2 of Solanum tuberosum (Potato).